A 333-amino-acid polypeptide reads, in one-letter code: T-cell surface glycoprotein CD1b (333 aa).

Residues 1 to 17 (MLLLPFQLLAVLFPGGN) form the signal peptide. Residues 18 to 303 (SEHAFQGPTS…YWRNPTSIGS (286 aa)) lie on the Extracellular side of the membrane. N-linked (GlcNAc...) asparagine glycosylation is found at Asn38, Asn75, and Asn146. Intrachain disulfides connect Cys120/Cys184, Cys149/Cys163, and Cys224/Cys279. Positions 185 to 295 (PRYLLGVLNA…LEGQDIILYW (111 aa)) constitute an Ig-like domain. Residue Asn258 is glycosylated (N-linked (GlcNAc...) asparagine). The helical transmembrane segment at 304–324 (IVLAIIVPSLLLLLCLALWYM) threads the bilayer. At 325–333 (RRRSYQNIP) the chain is on the cytoplasmic side. Residues 329-332 (YQNI) carry the Internalization signal motif.

Heterodimer with B2M (beta-2-microglobulin). Interacts with saposin C. Expressed on cortical thymocytes, on certain T-cell leukemias, and in various other tissues.

It localises to the cell membrane. It is found in the endosome membrane. Its subcellular location is the lysosome membrane. Its function is as follows. Antigen-presenting protein that binds self and non-self lipid and glycolipid antigens and presents them to T-cell receptors on natural killer T-cells. The polypeptide is T-cell surface glycoprotein CD1b (CD1B) (Homo sapiens (Human)).